The primary structure comprises 428 residues: Neuromedin-U receptor 1 (428 aa).

Residues 1 to 59 are Extracellular-facing; the sequence is MTPPCLNCSIFPGALSPNASRSPLVCNISEFKWPYQPEDLNLTDEALRLKYLGPQQMKQ. 2 N-linked (GlcNAc...) asparagine glycosylation sites follow: N27 and N41. A helical membrane pass occupies residues 60-80; the sequence is FVPICVTYLLIFVVGTLGNGL. Over 81–96 the chain is Cytoplasmic; the sequence is TCTVILRNKTMRTPTN. A helical membrane pass occupies residues 97 to 117; that stretch reads FYLFSLAVSDMLVLLVGLPLE. The Extracellular segment spans residues 118-137; it reads LYEMQQNYPFQLGASACYFR. C134 and C219 are disulfide-bonded. A helical transmembrane segment spans residues 138-158; that stretch reads ILLLETVCLASVLNVTALSVE. Over 159-181 the chain is Cytoplasmic; it reads RYVAVVRPLQAKSVMTRAHVRRM. A helical membrane pass occupies residues 182 to 202; the sequence is VGAIWVLATLFSLPNTSLHGL. Residues 203–235 are Extracellular-facing; the sequence is SQLTVPCRGPVPDSAICSLVGPMDFYKLVVLTT. The chain crosses the membrane as a helical span at residues 236–256; it reads ALLFFCLPMVTISVLYLLIGL. Over 257 to 294 the chain is Cytoplasmic; it reads RLRRERMLLQVEVKGRKTAATQETSHRRIQLQDRGRRQ. Residues 295 to 315 traverse the membrane as a helical segment; that stretch reads VTKMLFALVVVFGICWAPFHA. At 316–339 the chain is on the extracellular side; it reads DRIMWSLVYGHSTEGLHLAYQCVH. The helical transmembrane segment at 340-360 threads the bilayer; sequence IASGIFFYLGSAANPVLYSLM. The Cytoplasmic segment spans residues 361 to 428; sequence STRFRETFLQ…PGCQQETDPS (68 aa).

The protein belongs to the G-protein coupled receptor 1 family. Ubiquitously expressed.

It is found in the cell membrane. In terms of biological role, receptor for the neuromedin-U and neuromedin-S neuropeptides. The sequence is that of Neuromedin-U receptor 1 (Nmur1) from Mus musculus (Mouse).